We begin with the raw amino-acid sequence, 309 residues long: Taste receptor type 2 member 113 (309 aa).

Topologically, residues 1–10 (MVAVLQSTLP) are extracellular. The helical transmembrane segment at 11–31 (IIFSMEFIMGTLGNGFIFLIV) threads the bilayer. Topologically, residues 32–55 (CIDWVQRRKISLVDQIRTALAISR) are cytoplasmic. The chain crosses the membrane as a helical span at residues 56–76 (IALIWLIFLDWWVSVHYPALH). Residues 77–80 (ETGK) are Extracellular-facing. A helical transmembrane segment spans residues 81 to 101 (MLSTYLISWTVINHCNFWLTA). Over 102–127 (NLSILYFLKIANFSNIIFLYLKFRSK) the chain is Cytoplasmic. The helical transmembrane segment at 128–148 (NVVLVTLLVSLFFLFLNTVII) threads the bilayer. The Extracellular segment spans residues 149-185 (KIFSDVCFDSVQRNVSQIFIMYNHEQICKFLSFTNPM). Residue Asn-162 is glycosylated (N-linked (GlcNAc...) asparagine). A helical transmembrane segment spans residues 186 to 206 (FTFIPFVMSTVMFSLLIFSLW). At 207–229 (RHLKNMQHTAKGCRDISTTVHIR) the chain is on the cytoplasmic side. Residues 230 to 250 (ALQTIIVSVVLYTIFFLSFFV) form a helical membrane-spanning segment. Residues 251–262 (KVWSFVSPERYL) lie on the Extracellular side of the membrane. The helical transmembrane segment at 263 to 283 (IFLFVWALGNAVFSAHPFVMI) threads the bilayer. Residues 284 to 309 (LVNRRLRLASLSLIFWLWYRFKNIEV) are Cytoplasmic-facing.

Belongs to the G-protein coupled receptor T2R family.

The protein localises to the membrane. Functionally, putative taste receptor which may play a role in the perception of bitterness. The polypeptide is Taste receptor type 2 member 113 (Mus musculus (Mouse)).